We begin with the raw amino-acid sequence, 249 residues long: Leucyl/phenylalanyl-tRNA--protein transferase (249 aa).

This sequence belongs to the L/F-transferase family.

The protein localises to the cytoplasm. The catalysed reaction is N-terminal L-lysyl-[protein] + L-leucyl-tRNA(Leu) = N-terminal L-leucyl-L-lysyl-[protein] + tRNA(Leu) + H(+). The enzyme catalyses N-terminal L-arginyl-[protein] + L-leucyl-tRNA(Leu) = N-terminal L-leucyl-L-arginyl-[protein] + tRNA(Leu) + H(+). It carries out the reaction L-phenylalanyl-tRNA(Phe) + an N-terminal L-alpha-aminoacyl-[protein] = an N-terminal L-phenylalanyl-L-alpha-aminoacyl-[protein] + tRNA(Phe). Functions in the N-end rule pathway of protein degradation where it conjugates Leu, Phe and, less efficiently, Met from aminoacyl-tRNAs to the N-termini of proteins containing an N-terminal arginine or lysine. The protein is Leucyl/phenylalanyl-tRNA--protein transferase of Xanthomonas axonopodis pv. citri (strain 306).